The primary structure comprises 359 residues: S-adenosylmethionine:tRNA ribosyltransferase-isomerase (359 aa).

This sequence belongs to the QueA family. As to quaternary structure, monomer.

The protein localises to the cytoplasm. It carries out the reaction 7-aminomethyl-7-carbaguanosine(34) in tRNA + S-adenosyl-L-methionine = epoxyqueuosine(34) in tRNA + adenine + L-methionine + 2 H(+). Its pathway is tRNA modification; tRNA-queuosine biosynthesis. Its function is as follows. Transfers and isomerizes the ribose moiety from AdoMet to the 7-aminomethyl group of 7-deazaguanine (preQ1-tRNA) to give epoxyqueuosine (oQ-tRNA). The protein is S-adenosylmethionine:tRNA ribosyltransferase-isomerase of Ralstonia pickettii (strain 12J).